The chain runs to 316 residues: 4-hydroxy-3-methylbut-2-enyl diphosphate reductase (316 aa).

Cys-17 contributes to the [4Fe-4S] cluster binding site. Residues His-46 and His-79 each coordinate (2E)-4-hydroxy-3-methylbut-2-enyl diphosphate. Dimethylallyl diphosphate contacts are provided by His-46 and His-79. Isopentenyl diphosphate contacts are provided by His-46 and His-79. Residue Cys-101 coordinates [4Fe-4S] cluster. Position 129 (His-129) interacts with (2E)-4-hydroxy-3-methylbut-2-enyl diphosphate. His-129 lines the dimethylallyl diphosphate pocket. Isopentenyl diphosphate is bound at residue His-129. Residue Glu-131 is the Proton donor of the active site. A (2E)-4-hydroxy-3-methylbut-2-enyl diphosphate-binding site is contributed by Thr-170. Cys-200 serves as a coordination point for [4Fe-4S] cluster. The (2E)-4-hydroxy-3-methylbut-2-enyl diphosphate site is built by Ser-228, Ser-229, Asn-230, and Ser-273. Dimethylallyl diphosphate-binding residues include Ser-228, Ser-229, Asn-230, and Ser-273. Isopentenyl diphosphate is bound by residues Ser-228, Ser-229, Asn-230, and Ser-273.

The protein belongs to the IspH family. It depends on [4Fe-4S] cluster as a cofactor.

It catalyses the reaction isopentenyl diphosphate + 2 oxidized [2Fe-2S]-[ferredoxin] + H2O = (2E)-4-hydroxy-3-methylbut-2-enyl diphosphate + 2 reduced [2Fe-2S]-[ferredoxin] + 2 H(+). The enzyme catalyses dimethylallyl diphosphate + 2 oxidized [2Fe-2S]-[ferredoxin] + H2O = (2E)-4-hydroxy-3-methylbut-2-enyl diphosphate + 2 reduced [2Fe-2S]-[ferredoxin] + 2 H(+). It functions in the pathway isoprenoid biosynthesis; dimethylallyl diphosphate biosynthesis; dimethylallyl diphosphate from (2E)-4-hydroxy-3-methylbutenyl diphosphate: step 1/1. The protein operates within isoprenoid biosynthesis; isopentenyl diphosphate biosynthesis via DXP pathway; isopentenyl diphosphate from 1-deoxy-D-xylulose 5-phosphate: step 6/6. Functionally, catalyzes the conversion of 1-hydroxy-2-methyl-2-(E)-butenyl 4-diphosphate (HMBPP) into a mixture of isopentenyl diphosphate (IPP) and dimethylallyl diphosphate (DMAPP). Acts in the terminal step of the DOXP/MEP pathway for isoprenoid precursor biosynthesis. This chain is 4-hydroxy-3-methylbut-2-enyl diphosphate reductase, found in Ruegeria pomeroyi (strain ATCC 700808 / DSM 15171 / DSS-3) (Silicibacter pomeroyi).